The chain runs to 1073 residues: Carbamoyl phosphate synthase large chain (1073 aa).

Positions 2–403 (PKRTDIKSIL…SLQKALRGLE (402 aa)) are carboxyphosphate synthetic domain. ATP is bound by residues R129, R169, G175, G176, E208, L210, E215, G241, I242, H243, Q285, and E299. An ATP-grasp 1 domain is found at 133 to 328 (DVAMKKIGLE…IAKVAAKLAV (196 aa)). Mg(2+)-binding residues include Q285, E299, and N301. Mn(2+) contacts are provided by Q285, E299, and N301. Positions 404-553 (VGATGFDPKV…YSTYEEECEA (150 aa)) are oligomerization domain. The interval 554-936 (NPSTDREKIM…AFAKAQLGSN (383 aa)) is carbamoyl phosphate synthetic domain. The ATP-grasp 2 domain occupies 679–870 (QHAVDRLKLK…LAKVAARVMA (192 aa)). ATP contacts are provided by R715, H754, L756, E761, G786, V787, H788, S789, Q829, and E841. Q829, E841, and N843 together coordinate Mg(2+). 3 residues coordinate Mn(2+): Q829, E841, and N843. Residues 937–1073 (STMKKHGRAL…SVQEMHAQIK (137 aa)) form the MGS-like domain. Positions 937-1073 (STMKKHGRAL…SVQEMHAQIK (137 aa)) are allosteric domain.

Belongs to the CarB family. As to quaternary structure, composed of two chains; the small (or glutamine) chain promotes the hydrolysis of glutamine to ammonia, which is used by the large (or ammonia) chain to synthesize carbamoyl phosphate. Tetramer of heterodimers (alpha,beta)4. Mg(2+) serves as cofactor. Requires Mn(2+) as cofactor.

It carries out the reaction hydrogencarbonate + L-glutamine + 2 ATP + H2O = carbamoyl phosphate + L-glutamate + 2 ADP + phosphate + 2 H(+). The catalysed reaction is hydrogencarbonate + NH4(+) + 2 ATP = carbamoyl phosphate + 2 ADP + phosphate + 2 H(+). It participates in amino-acid biosynthesis; L-arginine biosynthesis; carbamoyl phosphate from bicarbonate: step 1/1. Its pathway is pyrimidine metabolism; UMP biosynthesis via de novo pathway; (S)-dihydroorotate from bicarbonate: step 1/3. Its function is as follows. Large subunit of the glutamine-dependent carbamoyl phosphate synthetase (CPSase). CPSase catalyzes the formation of carbamoyl phosphate from the ammonia moiety of glutamine, carbonate, and phosphate donated by ATP, constituting the first step of 2 biosynthetic pathways, one leading to arginine and/or urea and the other to pyrimidine nucleotides. The large subunit (synthetase) binds the substrates ammonia (free or transferred from glutamine from the small subunit), hydrogencarbonate and ATP and carries out an ATP-coupled ligase reaction, activating hydrogencarbonate by forming carboxy phosphate which reacts with ammonia to form carbamoyl phosphate. This is Carbamoyl phosphate synthase large chain from Escherichia coli O157:H7.